We begin with the raw amino-acid sequence, 112 residues long: Peptidyl-tRNA hydrolase (112 aa).

This sequence belongs to the PTH2 family.

The protein localises to the cytoplasm. It catalyses the reaction an N-acyl-L-alpha-aminoacyl-tRNA + H2O = an N-acyl-L-amino acid + a tRNA + H(+). Functionally, the natural substrate for this enzyme may be peptidyl-tRNAs which drop off the ribosome during protein synthesis. The polypeptide is Peptidyl-tRNA hydrolase (Haloquadratum walsbyi (strain DSM 16790 / HBSQ001)).